A 170-amino-acid chain; its full sequence is Peptide deformylase (170 aa).

Fe cation-binding residues include Cys-94 and His-136. Residue Glu-137 is part of the active site. A Fe cation-binding site is contributed by His-140.

This sequence belongs to the polypeptide deformylase family. Fe(2+) serves as cofactor.

The enzyme catalyses N-terminal N-formyl-L-methionyl-[peptide] + H2O = N-terminal L-methionyl-[peptide] + formate. In terms of biological role, removes the formyl group from the N-terminal Met of newly synthesized proteins. Requires at least a dipeptide for an efficient rate of reaction. N-terminal L-methionine is a prerequisite for activity but the enzyme has broad specificity at other positions. In Xylella fastidiosa (strain 9a5c), this protein is Peptide deformylase.